Consider the following 229-residue polypeptide: MAALQEVLLAVLLWPVLVTISNPINCGDEQSSLSNCLSISEEKLLDRESFSTLSSSIVFLKNHVLCLRRCLSHSQYSSRQARQENACMTKVLPIPSSKSEIQQITDKWLLHAVLMLVQSWIKPLVYLQTTMVRYDYASDVLLNKTKWVLEKLISLEQGVVILIKKILNEAVMTTTVSELDLFPTDLQPDILESVMNDYSLLSCFKKDARKIEILLKLLKCRRNDMYNCA.

The signal sequence occupies residues 1–21 (MAALQEVLLAVLLWPVLVTIS). Cystine bridges form between cysteine 26-cysteine 36, cysteine 87-cysteine 203, and cysteine 220-cysteine 228. Asparagine 143 carries an N-linked (GlcNAc...) asparagine glycan.

The protein belongs to the somatotropin/prolactin family. In terms of tissue distribution, pituitary gland.

It is found in the secreted. This chain is Somatolactin, found in Tetraodon miurus (Congo puffer).